Reading from the N-terminus, the 357-residue chain is Inositol-tetrakisphosphate 1-kinase 3 (357 aa).

Residues lysine 56 and lysine 98 each contribute to the 1D-myo-inositol 1,3,4-trisphosphate site. Residues arginine 133 and lysine 183 each coordinate ATP. Histidine 190 and lysine 222 together coordinate 1D-myo-inositol 1,3,4-trisphosphate. ATP contacts are provided by residues 211–222 (QEFVNHGGVLFK), serine 237, and serine 262. Mg(2+) contacts are provided by aspartate 302, aspartate 317, and asparagine 319. Asparagine 319 serves as a coordination point for 1D-myo-inositol 1,3,4-trisphosphate.

This sequence belongs to the ITPK1 family. Monomer. Mg(2+) serves as cofactor. Expressed in roots, leaves, flowers, anthers and embryos.

It catalyses the reaction 1D-myo-inositol 3,4,5,6-tetrakisphosphate + ATP = 1D-myo-inositol 1,3,4,5,6-pentakisphosphate + ADP + H(+). The catalysed reaction is 1D-myo-inositol 1,3,4-trisphosphate + ATP = 1D-myo-inositol 1,3,4,5-tetrakisphosphate + ADP + H(+). The enzyme catalyses 1D-myo-inositol 1,3,4-trisphosphate + ATP = 1D-myo-inositol 1,3,4,6-tetrakisphosphate + ADP + H(+). Functionally, kinase that can phosphorylate various inositol polyphosphate such as Ins(3,4,5,6)P4 or Ins(1,3,4)P3 and participates in phytic acid biosynthesis in developing seeds. Phytic acid is the primary storage form of phosphorus in cereal grains and other plant seeds. The chain is Inositol-tetrakisphosphate 1-kinase 3 from Oryza sativa subsp. japonica (Rice).